We begin with the raw amino-acid sequence, 86 residues long: MSVKIRLKRMGAKKRPYYRIVVMNSTSPRDGRAIEELGYYHLIEKQNQLKIKEDRMKDWISKGAILSDTVKMLLKKNNLNAKSQEV.

Belongs to the bacterial ribosomal protein bS16 family.

This is Small ribosomal subunit protein bS16 from Borreliella afzelii (strain PKo) (Borrelia afzelii).